A 253-amino-acid polypeptide reads, in one-letter code: Probable ATP-dependent transporter ycf16 (253 aa).

Residues 6–250 (LEVTNLHAAV…EKYGYDWLKN (245 aa)) form the ABC transporter domain. 38–45 (GKNGSGKS) serves as a coordination point for ATP.

This sequence belongs to the ABC transporter superfamily. Ycf16 family.

The protein localises to the plastid. It is found in the chloroplast. This is Probable ATP-dependent transporter ycf16 (ycf16) from Guillardia theta (Cryptophyte).